The chain runs to 369 residues: Epoxyqueuosine reductase (369 aa).

The active-site Proton donor is D135. One can recognise a 4Fe-4S ferredoxin-type domain in the interval 177 to 209 (IPLPVDEPSENQCGKCTACITSCPTNAIVAEGV). Residues C189, C192, C195, C199, C215, C242, C245, and C249 each contribute to the [4Fe-4S] cluster site.

This sequence belongs to the QueG family. Monomer. Requires cob(II)alamin as cofactor. [4Fe-4S] cluster serves as cofactor.

It is found in the cytoplasm. The enzyme catalyses epoxyqueuosine(34) in tRNA + AH2 = queuosine(34) in tRNA + A + H2O. It participates in tRNA modification; tRNA-queuosine biosynthesis. Catalyzes the conversion of epoxyqueuosine (oQ) to queuosine (Q), which is a hypermodified base found in the wobble positions of tRNA(Asp), tRNA(Asn), tRNA(His) and tRNA(Tyr). This is Epoxyqueuosine reductase from Vibrio cholerae serotype O1 (strain ATCC 39315 / El Tor Inaba N16961).